The primary structure comprises 150 residues: Protein-export protein SecB (150 aa).

Belongs to the SecB family. In terms of assembly, homotetramer, a dimer of dimers. One homotetramer interacts with 1 SecA dimer.

It localises to the cytoplasm. Functionally, one of the proteins required for the normal export of preproteins out of the cell cytoplasm. It is a molecular chaperone that binds to a subset of precursor proteins, maintaining them in a translocation-competent state. It also specifically binds to its receptor SecA. In Psychrobacter cryohalolentis (strain ATCC BAA-1226 / DSM 17306 / VKM B-2378 / K5), this protein is Protein-export protein SecB.